The chain runs to 478 residues: MQLTLNEKRLLLELVKTETTTPEEMGTILDRPADSVIQYGGLLSQKGLAQVDRAVTTTLTLTEEGTQYLKEGLPERQLYDSFSESASIADLNTHPHAKIGLGWMKRLGWVKIEAGNVIKTGDPAPSPIELALKNPDAAPADIKKDLLKRGLVTEEESVRYTITITDEGKKLAAAGITLTQETGTLTADQISSGAWKDLSLRRYDITKHPRPVWPGKIHPYQRMIDEMRRILLDMGFTELHGSIIQGAFWNFDALFQPQDHPAREMQDTFHLAGKQELPVGWEKVRDMHESGGETSSTGWGGKWDPEKAKATVLRTHTTSLSIQHLAAHPEPPVKAFCIGRVYRREAIDPTHLPEFEQLEGIVMDTHVNFRNLLGYLKEFYGRMGFESVRFRPGYFPYTEPSVEPEVYIEGLGWVELGGAGIFREEVTAPWGITCPVLAWGLGVSRVAMLRMGLTDLRELYQSDIDWVRNVPVVQGGRC.

Residues Thr-318, 357 to 359 (QLE), and Tyr-397 each bind L-phenylalanine. Glu-399 serves as a coordination point for Mg(2+). Position 422 (Phe-422) interacts with L-phenylalanine.

This sequence belongs to the class-II aminoacyl-tRNA synthetase family. Phe-tRNA synthetase alpha subunit type 2 subfamily. In terms of assembly, tetramer of two alpha and two beta subunits. Mg(2+) serves as cofactor.

It localises to the cytoplasm. The enzyme catalyses tRNA(Phe) + L-phenylalanine + ATP = L-phenylalanyl-tRNA(Phe) + AMP + diphosphate + H(+). This is Phenylalanine--tRNA ligase alpha subunit from Methanospirillum hungatei JF-1 (strain ATCC 27890 / DSM 864 / NBRC 100397 / JF-1).